The sequence spans 88 residues: U1-hexatoxin-Iw1d (88 aa).

Positions 1–17 (LKFVVLICLVIMASTSA) are cleaved as a signal peptide. Position 18 is a pyrrolidone carboxylic acid (Q18). Disulfide bonds link C20/C31, C25/C39, C30/C65, C49/C73, and C67/C80. A propeptide spanning residues 86–88 (RSE) is cleaved from the precursor.

The protein belongs to the MIT-like AcTx family. Expressed by the venom gland.

The protein resides in the secreted. The sequence is that of U1-hexatoxin-Iw1d from Illawarra wisharti (Illawarra funnel-web spider).